The following is a 116-amino-acid chain: Large ribosomal subunit protein bL17 (116 aa).

Belongs to the bacterial ribosomal protein bL17 family. In terms of assembly, part of the 50S ribosomal subunit. Contacts protein L32.

The protein is Large ribosomal subunit protein bL17 of Thermosynechococcus vestitus (strain NIES-2133 / IAM M-273 / BP-1).